A 270-amino-acid chain; its full sequence is Putative phosphatase YxeH (270 aa).

Aspartate 8 acts as the Nucleophile in catalysis. Aspartate 8 contributes to the Mg(2+) binding site. A phosphate-binding site is contributed by methionine 9. Aspartate 10 provides a ligand contact to Mg(2+). Phosphate contacts are provided by residues 42–43 and lysine 196; that span reads TG. Aspartate 219 is a Mg(2+) binding site. Asparagine 222 is a phosphate binding site.

This sequence belongs to the HAD-like hydrolase superfamily. Cof family. The cofactor is Mg(2+).

The protein is Putative phosphatase YxeH (yxeH) of Bacillus subtilis (strain 168).